Reading from the N-terminus, the 58-residue chain is Lantibiotic macedovicin (58 aa).

The propeptide occupies 1–25; sequence MMNATENQIFVETVSDQELEMLIGG. Residues T33 and T35 each carry the 2,3-didehydrobutyrine modification. 2 consecutive cross-links (beta-methyllanthionine (Thr-Cys)) follow at residues 33-38 and 35-57; these read TLTKDC and TKDC…CKNC. A disulfide bridge links C46 with C54.

Maturation of macedovicin involves the enzymatic dehydration of Thr-33 and Thr-35 into dehydrobutyrine residues, that can form a beta-methyllanthionine bond with Cys-38 and Cys-57, respectively. This is followed by membrane translocation and cleavage of the modified precursor.

The protein resides in the secreted. Its function is as follows. Lanthionine-containing peptide antibiotic (lantibiotic) active on Gram-positive bacteria. Macedovicin inhibits a broad spectrum of lactic acid bacteria, several food spoilage species (e.g. Clostridium spp.) and oral streptococci. The bactericidal activity of lantibiotics is based on depolarization of energized bacterial cytoplasmic membranes, initiated by the formation of aqueous transmembrane pores. This Streptococcus macedonicus (strain ACA-DC 198) protein is Lantibiotic macedovicin.